A 144-amino-acid polypeptide reads, in one-letter code: Putative pre-16S rRNA nuclease (144 aa).

Belongs to the YqgF nuclease family.

It is found in the cytoplasm. Could be a nuclease involved in processing of the 5'-end of pre-16S rRNA. In Oleidesulfovibrio alaskensis (strain ATCC BAA-1058 / DSM 17464 / G20) (Desulfovibrio alaskensis), this protein is Putative pre-16S rRNA nuclease.